Consider the following 310-residue polypeptide: Homoserine kinase (310 aa).

Residue 91–101 (PIGSGLGSSAC) coordinates ATP.

It belongs to the GHMP kinase family. Homoserine kinase subfamily.

The protein localises to the cytoplasm. The enzyme catalyses L-homoserine + ATP = O-phospho-L-homoserine + ADP + H(+). It participates in amino-acid biosynthesis; L-threonine biosynthesis; L-threonine from L-aspartate: step 4/5. Its function is as follows. Catalyzes the ATP-dependent phosphorylation of L-homoserine to L-homoserine phosphate. The chain is Homoserine kinase from Shigella sonnei (strain Ss046).